Reading from the N-terminus, the 440-residue chain is Trigger factor (440 aa).

Residues 162-247 enclose the PPIase FKBP-type domain; that stretch reads GDRVTFDFTG…LKKIEKFQLP (86 aa).

Belongs to the FKBP-type PPIase family. Tig subfamily.

The protein resides in the cytoplasm. The catalysed reaction is [protein]-peptidylproline (omega=180) = [protein]-peptidylproline (omega=0). Its function is as follows. Involved in protein export. Acts as a chaperone by maintaining the newly synthesized protein in an open conformation. Functions as a peptidyl-prolyl cis-trans isomerase. The protein is Trigger factor of Hamiltonella defensa subsp. Acyrthosiphon pisum (strain 5AT).